The sequence spans 212 residues: Protein HP-25 homolog 1 (212 aa).

Residues 1–34 (MPGGRRRVGSMNIAGFWILAQFVLLLVANVKSSA) form the signal peptide. Residues 36 to 66 (SELCGPRGARGPPGLSGLPGPPGYTGPIGMP) are disordered. Residues 40 to 53 (GPRGARGPPGLSGL) show a composition bias toward low complexity. The Collagen-like domain maps to 40-76 (GPRGARGPPGLSGLPGPPGYTGPIGMPGLTGRPGLPG). The region spanning 82-212 (PPLPQSAFSV…VFYGFLLNGN (131 aa)) is the C1q domain. N-linked (GlcNAc...) asparagine glycosylation occurs at N125.

It localises to the secreted. The sequence is that of Protein HP-25 homolog 1 from Bos taurus (Bovine).